The sequence spans 89 residues: Small ribosomal subunit protein uS15 (89 aa).

The interval 1 to 23 (MTLNTEAKQKIINKHQTHGTDTG) is disordered.

Belongs to the universal ribosomal protein uS15 family. Part of the 30S ribosomal subunit. Forms a bridge to the 50S subunit in the 70S ribosome, contacting the 23S rRNA.

In terms of biological role, one of the primary rRNA binding proteins, it binds directly to 16S rRNA where it helps nucleate assembly of the platform of the 30S subunit by binding and bridging several RNA helices of the 16S rRNA. Functionally, forms an intersubunit bridge (bridge B4) with the 23S rRNA of the 50S subunit in the ribosome. This chain is Small ribosomal subunit protein uS15, found in Prochlorococcus marinus (strain SARG / CCMP1375 / SS120).